Consider the following 311-residue polypeptide: Probable 5-dehydro-4-deoxyglucarate dehydratase (311 aa).

The protein belongs to the DapA family.

The enzyme catalyses 5-dehydro-4-deoxy-D-glucarate + H(+) = 2,5-dioxopentanoate + CO2 + H2O. The protein operates within carbohydrate acid metabolism; D-glucarate degradation; 2,5-dioxopentanoate from D-glucarate: step 2/2. In Ralstonia nicotianae (strain ATCC BAA-1114 / GMI1000) (Ralstonia solanacearum), this protein is Probable 5-dehydro-4-deoxyglucarate dehydratase.